The primary structure comprises 1125 residues: Angiopoietin-1 receptor (1125 aa).

The first 22 residues, 1–22, serve as a signal peptide directing secretion; it reads MDSLAGLVLCGVSLLLSATVDG. The Extracellular segment spans residues 23 to 748; sequence AMDLILINSL…PADLGGRKML (726 aa). An intrachain disulfide couples cysteine 44 to cysteine 102. The 80-residue stretch at 44-123 folds into the Ig-like C2-type 1 domain; sequence CIASGWRPHE…RTMKMRQQAS (80 aa). N-linked (GlcNAc...) asparagine glycosylation occurs at asparagine 158. EGF-like domains follow at residues 210 to 252, 254 to 299, and 301 to 341; these read RCEA…RTCE, ACEP…LQCN, and ACQP…LQCE. Disulfide bonds link cysteine 211–cysteine 220, cysteine 224–cysteine 233, cysteine 227–cysteine 240, cysteine 242–cysteine 251, cysteine 255–cysteine 264, cysteine 268–cysteine 274, cysteine 280–cysteine 287, cysteine 289–cysteine 298, cysteine 302–cysteine 311, cysteine 315–cysteine 323, cysteine 317–cysteine 329, cysteine 331–cysteine 340, and cysteine 370–cysteine 424. One can recognise an Ig-like C2-type 2 domain in the interval 350–440; sequence PKIEDLPDHI…GMVEKPFNIS (91 aa). 3 consecutive Fibronectin type-III domains span residues 447 to 541, 545 to 637, and 642 to 735; these read PLNA…TASI, PPRG…TLSD, and QPEN…TLSE. Residues 749–769 form a helical membrane-spanning segment; that stretch reads LIAILGSAGMTCLTVLLAFLI. The Cytoplasmic portion of the chain corresponds to 770-1125; it reads MLQLKRANVQ…GIDCSAEEAA (356 aa). Positions 825–1097 constitute a Protein kinase domain; sequence IKFQDVIGEG…QILVSLNRML (273 aa). Residues 831-839 and lysine 856 each bind ATP; that span reads IGEGNFGQV. Tyrosine 861 bears the Phosphotyrosine; by autocatalysis mark. Aspartate 965 serves as the catalytic Proton acceptor. 3 positions are modified to phosphotyrosine; by autocatalysis: tyrosine 993, tyrosine 1103, and tyrosine 1109.

The protein belongs to the protein kinase superfamily. Tyr protein kinase family. Tie subfamily. As to quaternary structure, homodimer. Heterodimer with TIE1. Interacts with ANGPT1, ANGPT2 and ANGPT4. At cell-cell contacts in quiescent cells, forms a signaling complex composed of ANGPT1 plus TEK molecules from two adjoining cells. In the absence of endothelial cell-cell contacts, interaction with ANGPT1 mediates contacts with the extracellular matrix. Interacts (tyrosine phosphorylated) with TNIP2. Interacts (tyrosine phosphorylated) with SHC1 (via SH2 domain). Interacts with PTPRB; this promotes endothelial cell-cell adhesion. Interacts with DOK2, GRB2, GRB7, GRB14, PIK3R1 and PTPN11/SHP2. Colocalizes with DOK2 at contacts with the extracellular matrix in migrating cells. Post-translationally, proteolytic processing leads to the shedding of the extracellular domain (soluble TIE-2 alias sTIE-2). Autophosphorylated on tyrosine residues in response to ligand binding. Autophosphorylation occurs in trans, i.e. one subunit of the dimeric receptor phosphorylates tyrosine residues on the other subunit. Autophosphorylation occurs in a sequential manner, where Tyr-993 in the kinase activation loop is phosphorylated first, followed by autophosphorylation at Tyr-1109 and at additional tyrosine residues. ANGPT1-induced phosphorylation is impaired during hypoxia, due to increased expression of ANGPT2. Phosphorylation is important for interaction with GRB14, PIK3R1 and PTPN11. Phosphorylation at Tyr-1103 is important for interaction with GRB2 and GRB7. Phosphorylation at Tyr-1109 is important for interaction with DOK2 and for coupling to downstream signal transduction pathways in endothelial cells. Dephosphorylated by PTPRB. In terms of processing, ubiquitinated. The phosphorylated receptor is ubiquitinated and internalized, leading to its degradation. As to expression, specifically expressed in developing vascular endothelial cells.

The protein resides in the cell membrane. It is found in the cell junction. Its subcellular location is the focal adhesion. It localises to the cytoplasm. The protein localises to the cytoskeleton. The protein resides in the secreted. It catalyses the reaction L-tyrosyl-[protein] + ATP = O-phospho-L-tyrosyl-[protein] + ADP + H(+). Angiopoietin binding leads to receptor dimerization and activation by autophosphorylation at Tyr-993 on the kinase activation loop. Its function is as follows. Tyrosine-protein kinase that acts as a cell-surface receptor for ANGPT1, ANGPT2 and ANGPT4 and regulates angiogenesis, endothelial cell survival, proliferation, migration, adhesion and cell spreading, reorganization of the actin cytoskeleton, but also maintenance of vascular quiescence. Has anti-inflammatory effects by preventing the leakage of pro-inflammatory plasma proteins and leukocytes from blood vessels. Required for normal angiogenesis and heart development during embryogenesis. Required for post-natal hematopoiesis. After birth, activates or inhibits angiogenesis, depending on the context. Inhibits angiogenesis and promotes vascular stability in quiescent vessels, where endothelial cells have tight contacts. In quiescent vessels, ANGPT1 oligomers recruit TEK to cell-cell contacts, forming complexes with TEK molecules from adjoining cells, and this leads to preferential activation of phosphatidylinositol 3-kinase and the AKT1 signaling cascades. In migrating endothelial cells that lack cell-cell adhesions, ANGT1 recruits TEK to contacts with the extracellular matrix, leading to the formation of focal adhesion complexes, activation of PTK2/FAK and of the downstream kinases MAPK1/ERK2 and MAPK3/ERK1, and ultimately to the stimulation of sprouting angiogenesis. ANGPT1 signaling triggers receptor dimerization and autophosphorylation at specific tyrosine residues that then serve as binding sites for scaffold proteins and effectors. Signaling is modulated by ANGPT2 that has lower affinity for TEK, can promote TEK autophosphorylation in the absence of ANGPT1, but inhibits ANGPT1-mediated signaling by competing for the same binding site. Signaling is also modulated by formation of heterodimers with TIE1, and by proteolytic processing that gives rise to a soluble TEK extracellular domain. The soluble extracellular domain modulates signaling by functioning as decoy receptor for angiopoietins. TEK phosphorylates DOK2, GRB7, GRB14, PIK3R1, SHC1 and TIE1. This is Angiopoietin-1 receptor (TEK) from Bos taurus (Bovine).